The primary structure comprises 249 residues: Serine 3-dehydrogenase (249 aa).

An NADP(+)-binding site is contributed by 6–30; that stretch reads LITGATSGFGQATAQRFVKEGWKVI. Position 135 (serine 135) interacts with substrate. Tyrosine 148 (proton acceptor) is an active-site residue.

This sequence belongs to the short-chain dehydrogenases/reductases (SDR) family. Homotetramer.

It carries out the reaction L-serine + NADP(+) = aminoacetaldehyde + CO2 + NADPH. Its function is as follows. Catalyzes the oxidation of the hydroxyl group of serine to form 2-aminomalonate semialdehyde which is spontaneously converted into 2-aminoacetaldehyde and CO(2). Also acts on D-serine, L-glycerate, D-glycerate and 2-methyl-DL-serine. Does not act on O-methyl-DL-serine and L-threonine. This chain is Serine 3-dehydrogenase (sdh), found in Rhizobium radiobacter (Agrobacterium tumefaciens).